A 212-amino-acid chain; its full sequence is MIVIFLGPPGAGKGTQGKKIAKKIDLPHIALGDIFRTIIKTSTSEAELINNYVKQGELVPNAIVNQVIKNFLLSSAYKNGYILDGYPRNLEQAKFFESFIKEKIKIIYFDVSDELLIKRVLGRYSCKNCRKIYNSYFLQPKTDNVCDVCGSSTFDYRKDDNEEVVKKRIEVYKTETYPLIDYYKNSGNFYLVNGSKNEQEIEIDIQKILKIN.

An ATP-binding site is contributed by 10-15; sequence GAGKGT. Positions 30 to 59 are NMP; it reads ALGDIFRTIIKTSTSEAELINNYVKQGELV. Residues arginine 36, 57–59, 85–88, and glutamine 92 contribute to the AMP site; these read ELV and GYPR. Positions 122–160 are LID; sequence GRYSCKNCRKIYNSYFLQPKTDNVCDVCGSSTFDYRKDD. Residue arginine 123 coordinates ATP. 2 residues coordinate Zn(2+): cysteine 126 and cysteine 129. ATP is bound at residue 132 to 133; that stretch reads IY. Zn(2+)-binding residues include cysteine 146 and cysteine 149. Residues arginine 157 and arginine 168 each contribute to the AMP site. Position 196 (lysine 196) interacts with ATP.

It belongs to the adenylate kinase family. Monomer.

Its subcellular location is the cytoplasm. It catalyses the reaction AMP + ATP = 2 ADP. Its pathway is purine metabolism; AMP biosynthesis via salvage pathway; AMP from ADP: step 1/1. Functionally, catalyzes the reversible transfer of the terminal phosphate group between ATP and AMP. Plays an important role in cellular energy homeostasis and in adenine nucleotide metabolism. In Rickettsia akari (strain Hartford), this protein is Adenylate kinase.